The chain runs to 471 residues: Ribulose bisphosphate carboxylase large chain (471 aa).

Positions 1–2 (MS) are excised as a propeptide. Residue Pro-3 is modified to N-acetylproline. The residue at position 14 (Lys-14) is an N6,N6,N6-trimethyllysine. Residues Asn-123 and Thr-173 each contribute to the substrate site. Lys-175 acts as the Proton acceptor in catalysis. A substrate-binding site is contributed by Lys-177. Residues Lys-201, Asp-203, and Glu-204 each contribute to the Mg(2+) site. At Lys-201 the chain carries N6-carboxylysine. The active-site Proton acceptor is His-294. Substrate-binding residues include Arg-295, His-327, and Ser-379.

This sequence belongs to the RuBisCO large chain family. Type I subfamily. In terms of assembly, heterohexadecamer of 8 large chains and 8 small chains; disulfide-linked. The disulfide link is formed within the large subunit homodimers. It depends on Mg(2+) as a cofactor. Post-translationally, the disulfide bond which can form in the large chain dimeric partners within the hexadecamer appears to be associated with oxidative stress and protein turnover.

Its subcellular location is the plastid. The protein resides in the chloroplast. The enzyme catalyses 2 (2R)-3-phosphoglycerate + 2 H(+) = D-ribulose 1,5-bisphosphate + CO2 + H2O. It catalyses the reaction D-ribulose 1,5-bisphosphate + O2 = 2-phosphoglycolate + (2R)-3-phosphoglycerate + 2 H(+). Its function is as follows. RuBisCO catalyzes two reactions: the carboxylation of D-ribulose 1,5-bisphosphate, the primary event in carbon dioxide fixation, as well as the oxidative fragmentation of the pentose substrate in the photorespiration process. Both reactions occur simultaneously and in competition at the same active site. The sequence is that of Ribulose bisphosphate carboxylase large chain from Drymophloeus subdistichus (Palm tree).